The sequence spans 193 residues: MSLVPYVIEQTSRGERNYDIYSRLLKDRIIFLGEEVNETTASLVVAQLLFLESEDPNKDIHLYINSPGGMVTAGLAIYDTMQYIKCDVSTICIGLAASMGAFLLAGGAKGKRYALPNAEIMIHQPSGGAKGQATEIQIAAENILKTKKRLNEILAANTGKPYETIAADTERDNYMSAQEAAEYGLIDSVITNR.

Serine 98 serves as the catalytic Nucleophile. Histidine 123 is an active-site residue.

This sequence belongs to the peptidase S14 family. As to quaternary structure, fourteen ClpP subunits assemble into 2 heptameric rings which stack back to back to give a disk-like structure with a central cavity, resembling the structure of eukaryotic proteasomes.

The protein localises to the cytoplasm. The catalysed reaction is Hydrolysis of proteins to small peptides in the presence of ATP and magnesium. alpha-casein is the usual test substrate. In the absence of ATP, only oligopeptides shorter than five residues are hydrolyzed (such as succinyl-Leu-Tyr-|-NHMec, and Leu-Tyr-Leu-|-Tyr-Trp, in which cleavage of the -Tyr-|-Leu- and -Tyr-|-Trp bonds also occurs).. In terms of biological role, cleaves peptides in various proteins in a process that requires ATP hydrolysis. Has a chymotrypsin-like activity. Plays a major role in the degradation of misfolded proteins. This chain is ATP-dependent Clp protease proteolytic subunit, found in Agathobacter rectalis (strain ATCC 33656 / DSM 3377 / JCM 17463 / KCTC 5835 / VPI 0990) (Eubacterium rectale).